Consider the following 919-residue polypeptide: Probable dipeptidyl-aminopeptidase B (919 aa).

Residues 1–10 (MRRSDGHEET) show a composition bias toward basic and acidic residues. Residues 1 to 53 (MRRSDGHEETSEFLPMTHSRSVSAASQTSTDSSLSTESLFPREQKPFPNAMGG) form a disordered region. Residues 1–92 (MRRSDGHEET…AATGGGRARR (92 aa)) are Cytoplasmic-facing. Over residues 21 to 38 (SVSAASQTSTDSSLSTES) the composition is skewed to low complexity. Residues 93 to 113 (IFWILVLLCLGGWLLAFVLFL) form a helical; Signal-anchor for type II membrane protein membrane-spanning segment. Topologically, residues 114 to 919 (TGGRANYQTA…MKRSLRLLSP (806 aa)) are vacuolar. Asn-200, Asn-352, and Asn-643 each carry an N-linked (GlcNAc...) asparagine glycan. Ser-757 functions as the Charge relay system in the catalytic mechanism. Asn-811 is a glycosylation site (N-linked (GlcNAc...) asparagine). Residues Asp-834 and His-867 each act as charge relay system in the active site.

This sequence belongs to the peptidase S9B family.

It is found in the vacuole membrane. The enzyme catalyses Release of an N-terminal dipeptide, Xaa-Yaa-|-Zaa-, from a polypeptide, preferentially when Yaa is Pro, provided Zaa is neither Pro nor hydroxyproline.. Type IV dipeptidyl-peptidase which removes N-terminal dipeptides sequentially from polypeptides having unsubstituted N-termini provided that the penultimate residue is proline. This Aspergillus fumigatus (strain CBS 144.89 / FGSC A1163 / CEA10) (Neosartorya fumigata) protein is Probable dipeptidyl-aminopeptidase B (dapB).